The following is a 98-amino-acid chain: NADH-ubiquinone oxidoreductase chain 4L (98 aa).

Transmembrane regions (helical) follow at residues 2–22 (PSTF…TLMF), 26–46 (LMST…MTSV), and 58–79 (PIPI…ALLV).

This sequence belongs to the complex I subunit 4L family. Core subunit of respiratory chain NADH dehydrogenase (Complex I) which is composed of 45 different subunits.

It is found in the mitochondrion inner membrane. The catalysed reaction is a ubiquinone + NADH + 5 H(+)(in) = a ubiquinol + NAD(+) + 4 H(+)(out). Its function is as follows. Core subunit of the mitochondrial membrane respiratory chain NADH dehydrogenase (Complex I) which catalyzes electron transfer from NADH through the respiratory chain, using ubiquinone as an electron acceptor. Part of the enzyme membrane arm which is embedded in the lipid bilayer and involved in proton translocation. The protein is NADH-ubiquinone oxidoreductase chain 4L of Mus musculus (Mouse).